A 734-amino-acid chain; its full sequence is Photosystem I P700 chlorophyll a apoprotein A2 (734 aa).

A run of 8 helical transmembrane segments spans residues 46 to 69 (IFASHFGQLAIIFLWTSGNLFHVA), 135 to 158 (LYTGALFLLFLSAISLIAGWLHLQ), 175 to 199 (LNHHLSGLFGVSSLAWTGHLVHVAI), 273 to 291 (IAHHHLAIAFIFLVAGHMY), 330 to 353 (IHFQLGLALASLGVITSLVAQHMY), 369 to 395 (AALYTHHQYIAGFIMTGAFAHGAIFFI), 417 to 439 (AIKSHLSWVSLFLGFHTLGLYVH), and 517 to 535 (FLVHHAIALGLHTTTLILV). Positions 559 and 568 each coordinate [4Fe-4S] cluster. Helical transmembrane passes span 575–596 (AFYLAVFWMLNTIGWVTFYWHW) and 643–665 (LSVWAWMFLFGHLVWATGFMFLI). The chlorophyll a site is built by His-654, Met-662, and Tyr-670. Trp-671 serves as a coordination point for phylloquinone. The helical transmembrane segment at 707-727 (LVGLAHFSVGYIFTYAAFLIA) threads the bilayer.

This sequence belongs to the PsaA/PsaB family. In terms of assembly, the PsaA/B heterodimer binds the P700 chlorophyll special pair and subsequent electron acceptors. PSI consists of a core antenna complex that captures photons, and an electron transfer chain that converts photonic excitation into a charge separation. The eukaryotic PSI reaction center is composed of at least 11 subunits. It depends on P700 is a chlorophyll a/chlorophyll a' dimer, A0 is one or more chlorophyll a, A1 is one or both phylloquinones and FX is a shared 4Fe-4S iron-sulfur center. as a cofactor.

It is found in the plastid. It localises to the chloroplast thylakoid membrane. The enzyme catalyses reduced [plastocyanin] + hnu + oxidized [2Fe-2S]-[ferredoxin] = oxidized [plastocyanin] + reduced [2Fe-2S]-[ferredoxin]. In terms of biological role, psaA and PsaB bind P700, the primary electron donor of photosystem I (PSI), as well as the electron acceptors A0, A1 and FX. PSI is a plastocyanin-ferredoxin oxidoreductase, converting photonic excitation into a charge separation, which transfers an electron from the donor P700 chlorophyll pair to the spectroscopically characterized acceptors A0, A1, FX, FA and FB in turn. Oxidized P700 is reduced on the lumenal side of the thylakoid membrane by plastocyanin. The chain is Photosystem I P700 chlorophyll a apoprotein A2 from Liriodendron tulipifera (Tuliptree).